The primary structure comprises 333 residues: Taste receptor type 2 member 38 (333 aa).

Residues Met1 to Thr17 lie on the Extracellular side of the membrane. A helical transmembrane segment spans residues Phe18 to Leu38. Topologically, residues Val39–Cys55 are cytoplasmic. Residues Val56 to Ile76 traverse the membrane as a helical segment. At Gln77–Ala94 the chain is on the extracellular side. Residues Ile95–Leu115 form a helical membrane-spanning segment. The Cytoplasmic segment spans residues Leu116 to Gln142. The helical transmembrane segment at Met143–Phe163 threads the bilayer. Residues Ser164–Asn190 are Extracellular-facing. The N-linked (GlcNAc...) asparagine glycan is linked to Asn178. A helical transmembrane segment spans residues Leu191–Val211. Residues Ser212–Ser251 lie on the Cytoplasmic side of the membrane. Residues Phe252–Leu272 traverse the membrane as a helical segment. Over Trp273–Lys276 the chain is Extracellular. A helical transmembrane segment spans residues Ile277 to Leu297. Residues Ile298–Cys333 are Cytoplasmic-facing.

Belongs to the G-protein coupled receptor T2R family.

The protein resides in the membrane. In terms of biological role, receptor that may play a role in the perception of bitterness and is gustducin-linked. May play a role in sensing the chemical composition of the gastrointestinal content. The activity of this receptor may stimulate alpha gustducin, mediate PLC-beta-2 activation and lead to the gating of TRPM5. The protein is Taste receptor type 2 member 38 (TAS2R38) of Pan paniscus (Pygmy chimpanzee).